The following is a 92-amino-acid chain: Phospholemman (92 aa).

The N-terminal stretch at 1 to 20 (MASPGHILIVCVCLLSMASA) is a signal peptide. Residues 21-35 (EAPQEPDPFTYDYHT) lie on the Extracellular side of the membrane. The helical transmembrane segment at 36-56 (LRIGGLTIAGILFILGILIIL) threads the bilayer. Residues 57–92 (SKRCRCKFNQQQRTGEPDEEEGTFRSSIRRLSTRRR) are Cytoplasmic-facing. Residue C60 is the site of S-palmitoyl cysteine attachment. C62 carries the S-glutathionyl cysteine; alternate modification. C62 is lipidated: S-palmitoyl cysteine; alternate. Positions 66–92 (QQQRTGEPDEEEGTFRSSIRRLSTRRR) are disordered. T79 is modified (phosphothreonine). Residue S82 is modified to Phosphoserine. S83 carries the phosphoserine; by PKA and PKC modification. Basic residues predominate over residues 83–92 (SIRRLSTRRR). S88 is modified (phosphoserine; by PKA). T89 carries the post-translational modification Phosphothreonine; by PKC.

This sequence belongs to the FXYD family. As to quaternary structure, homotetramer. Monomer. Regulatory subunit of the sodium/potassium-transporting ATPase (NKA) which is composed of a catalytic alpha subunit, a non-catalytic beta subunit and an additional regulatory subunit. The monomeric form associates with NKA while the oligomeric form does not. Interacts with the catalytic alpha-1 subunit ATP1A1. Also interacts with the catalytic alpha-2 and alpha-3 subunits ATP1A2 and ATP1A3. Very little interaction with ATP1A1, ATP1A2 or ATP1A3 when phosphorylated at Ser-83. Interacts with the non-catalytic beta-1 subunit ATP1B1. Oxidative stress decreases interaction with ATP1A1 but increases interaction with ATP1B1. Major plasma membrane substrate for cAMP-dependent protein kinase (PKA) and protein kinase C (PKC) in several different tissues. Phosphorylated in response to insulin and adrenergic stimulation. Phosphorylation at Ser-88 stimulates sodium/potassium-transporting ATPase activity while the unphosphorylated form inhibits sodium/potassium-transporting ATPase activity. Phosphorylation increases tetramerization, decreases binding to ATP1A1 and reduces inhibition of ATP1A1 activity. Phosphorylation at Ser-83 leads to greatly reduced interaction with ATP1A1, ATP1A2 and ATP1A3. May be phosphorylated by DMPK. In terms of processing, palmitoylation increases half-life and stability and is enhanced upon phosphorylation at Ser-88 by PKA. In terms of tissue distribution, in adult brain, highest levels are found in the cerebellum and in the lateral, third and fourth ventricles of the choroid plexus (at protein level). Also detected in cells of a portion of the ependymal lining of the lateral ventricle on its rostral surface posterior to the caudate putamen (at protein level). Expressed in a subset of neurons which secrete gonadotropin-releasing hormone.

It is found in the cell membrane. The protein localises to the sarcolemma. Its subcellular location is the apical cell membrane. The protein resides in the membrane. It localises to the caveola. It is found in the T-tubule. Associates with and regulates the activity of the sodium/potassium-transporting ATPase (NKA) which transports Na(+) out of the cell and K(+) into the cell. Inhibits NKA activity in its unphosphorylated state and stimulates activity when phosphorylated. Reduces glutathionylation of the NKA beta-1 subunit ATP1B1, thus reversing glutathionylation-mediated inhibition of ATP1B1. Contributes to female sexual development by maintaining the excitability of neurons which secrete gonadotropin-releasing hormone. The polypeptide is Phospholemman (Rattus norvegicus (Rat)).